The following is a 295-amino-acid chain: Bifunctional protein FolD (295 aa).

Residues 172–174 (GRS), Ser-197, and Ile-238 each bind NADP(+).

It belongs to the tetrahydrofolate dehydrogenase/cyclohydrolase family. In terms of assembly, homodimer.

The catalysed reaction is (6R)-5,10-methylene-5,6,7,8-tetrahydrofolate + NADP(+) = (6R)-5,10-methenyltetrahydrofolate + NADPH. The enzyme catalyses (6R)-5,10-methenyltetrahydrofolate + H2O = (6R)-10-formyltetrahydrofolate + H(+). It functions in the pathway one-carbon metabolism; tetrahydrofolate interconversion. Catalyzes the oxidation of 5,10-methylenetetrahydrofolate to 5,10-methenyltetrahydrofolate and then the hydrolysis of 5,10-methenyltetrahydrofolate to 10-formyltetrahydrofolate. This chain is Bifunctional protein FolD, found in Rickettsia akari (strain Hartford).